Reading from the N-terminus, the 247-residue chain is uncharacterized protein (247 aa).

It belongs to the AIM2 family.

The protein localises to the cytoplasm. Its subcellular location is the nucleus. This is an uncharacterized protein from Schizosaccharomyces pombe (strain 972 / ATCC 24843) (Fission yeast).